Here is a 489-residue protein sequence, read N- to C-terminus: CUGBP Elav-like family member 1-A (489 aa).

3 consecutive RRM domains span residues 16 to 99 (IKMF…PADS), 108 to 188 (RKLF…FADT), and 404 to 482 (ANLF…LKRS). A necessary for oligomerization and EDEN-dependent deadenylation region spans residues 183 to 210 (VKFADTQKDKEQKRMTQQLQQQMQQLNA).

Belongs to the CELF/BRUNOL family. Oligomer. Oligomerization is required for RNA-binding and EDEN-dependent deadenylation. In terms of processing, phosphorylated during oocyte maturation and dephosphorylated following egg activation. Dephosphorylation is calcium dependent and correlates with the increase in the activity of EDEN-dependent deadenylation.

Its subcellular location is the nucleus. The protein resides in the cytoplasm. Functionally, RNA-binding protein implicated in the regulation of several post-transcriptional events. May be involved in pre-mRNA alternative splicing, mRNA translation activation and stability. Mediates the rapid and sequence-specific cytoplasmic deadenylation of EDEN-containing maternal mRNAs following fertilization. Binds to AU-rich sequences (AREs) of jun mRNA. Binds to the embryonic deadenylation element (EDEN) motif localized in the 3'-UTR of maternal mRNAs. Binds to RNA containing several repeats of the consensus sequence 5'-UGU-3'. EDEN-dependent deadenylation is enhanced by the presence of an additional cis element composed of three AUU repeats. This Xenopus laevis (African clawed frog) protein is CUGBP Elav-like family member 1-A (cugbp1-a).